Here is a 211-residue protein sequence, read N- to C-terminus: ATP phosphoribosyltransferase (211 aa).

Belongs to the ATP phosphoribosyltransferase family. Short subfamily. Heteromultimer composed of HisG and HisZ subunits.

The protein resides in the cytoplasm. The catalysed reaction is 1-(5-phospho-beta-D-ribosyl)-ATP + diphosphate = 5-phospho-alpha-D-ribose 1-diphosphate + ATP. It functions in the pathway amino-acid biosynthesis; L-histidine biosynthesis; L-histidine from 5-phospho-alpha-D-ribose 1-diphosphate: step 1/9. Functionally, catalyzes the condensation of ATP and 5-phosphoribose 1-diphosphate to form N'-(5'-phosphoribosyl)-ATP (PR-ATP). Has a crucial role in the pathway because the rate of histidine biosynthesis seems to be controlled primarily by regulation of HisG enzymatic activity. This chain is ATP phosphoribosyltransferase, found in Pseudomonas putida (strain W619).